Consider the following 281-residue polypeptide: N-methyltransferase tcpN (281 aa).

Belongs to the methyltransferase superfamily. LaeA methyltransferase family.

It functions in the pathway secondary metabolite biosynthesis. Functionally, N-methyltransferase; part of the gene cluster that mediates the biosynthesis of an unusual class of epipolythiodioxopiperazines (ETPs) lacking the reactive thiol group important for toxicity. Firstly, L-tyrosine is prenylated by tcpD, before undergoing condensation with L-glycine in a reaction catalyzed by the NRPS tcpP leading to the diketopiperazine (DKP) backbone. Afterwards the alpha-carbon of tyrosine is oxidized by the cytochrome P450 tcpC to form a hydroxyl group. However, in contrast other ETP biosynthesis pathways studied so far, tcpC is not able to bishydroxylate the DKP at both alpha-carbon positions, but hydroxylates the alpha-carbon of the tyrosine part and the nitrogen of the glycine part. The next steps involve an alpha,beta-elimination reaction catalyzed by tcpI, a methylation by the methyltransferase tcpN the action of the four enzyme cascade tcpG/K/J/I. Due to a dysfunctional cytochrome P450 monooxygenase tcpC, the pathway leads to the biosynthesis of probable non-toxic metabolites lacking the reactive thiol group. This is N-methyltransferase tcpN from Claviceps purpurea (strain 20.1) (Ergot fungus).